Reading from the N-terminus, the 218-residue chain is Epoxyqueuosine reductase QueH (218 aa).

[4Fe-4S] cluster-binding residues include Cys22, Cys23, Cys101, and Cys104. Cys184 and Cys186 are disulfide-bonded.

Belongs to the QueH family.

It carries out the reaction epoxyqueuosine(34) in tRNA + AH2 = queuosine(34) in tRNA + A + H2O. It functions in the pathway tRNA modification; tRNA-queuosine biosynthesis. In terms of biological role, catalyzes the conversion of epoxyqueuosine (oQ) to queuosine (Q), which is a hypermodified base found in the wobble positions of tRNA(Asp), tRNA(Asn), tRNA(His) and tRNA(Tyr). The sequence is that of Epoxyqueuosine reductase QueH from Acinetobacter baylyi (strain ATCC 33305 / BD413 / ADP1).